We begin with the raw amino-acid sequence, 611 residues long: Alkyldihydroxyacetonephosphate synthase (611 aa).

One can recognise an FAD-binding PCMH-type domain in the interval 137 to 317 (VKNAPDLIVL…TEAVMKVHAV (181 aa)). Residues 169–175 (PMGGGSN), 237–243 (DSFEFST), 250–255 (TCSSGH), and 301–307 (EGTLGII) each bind FAD. R447 is a substrate binding site. Catalysis depends on Y508, which acts as the Proton donor/acceptor. Residues 544–546 (HHH) are important for enzyme activity. The Microbody targeting signal signature appears at 609–611 (PKL).

It belongs to the FAD-binding oxidoreductase/transferase type 4 family. Homodimer. Requires FAD as cofactor.

It localises to the peroxisome. The catalysed reaction is a long chain fatty alcohol + a 1-acylglycerone 3-phosphate = a 1-O-alkylglycerone 3-phosphate + a long-chain fatty acid + H(+). The protein operates within glycerolipid metabolism; ether lipid biosynthesis. Functionally, catalyzes the exchange of an acyl for a long-chain alkyl group and the formation of the ether bond in the biosynthesis of ether phospholipids. This is Alkyldihydroxyacetonephosphate synthase (eapA) from Dictyostelium discoideum (Social amoeba).